Here is a 234-residue protein sequence, read N- to C-terminus: LexA repressor (234 aa).

The tract at residues 1-29 (MSDAANPEGHKRSLPGRPPGIRADSSGLT) is disordered. Residues 52–72 (MREIGQAVGLSSTSSVAHQLM) constitute a DNA-binding region (H-T-H motif). Residues 90-109 (YEVRGSDQAASVQPTDTAGK) form a disordered region. Active-site for autocatalytic cleavage activity residues include S158 and K195.

This sequence belongs to the peptidase S24 family. As to quaternary structure, homodimer.

The catalysed reaction is Hydrolysis of Ala-|-Gly bond in repressor LexA.. Functionally, represses a number of genes involved in the response to DNA damage (SOS response), including recA and lexA. In the presence of single-stranded DNA, RecA interacts with LexA causing an autocatalytic cleavage which disrupts the DNA-binding part of LexA, leading to derepression of the SOS regulon and eventually DNA repair. This Streptomyces coelicolor (strain ATCC BAA-471 / A3(2) / M145) protein is LexA repressor.